A 292-amino-acid polypeptide reads, in one-letter code: Ribosomal protein L11 methyltransferase (292 aa).

The S-adenosyl-L-methionine site is built by Thr-136, Gly-159, Asp-181, and Asn-228.

This sequence belongs to the methyltransferase superfamily. PrmA family.

The protein resides in the cytoplasm. It catalyses the reaction L-lysyl-[protein] + 3 S-adenosyl-L-methionine = N(6),N(6),N(6)-trimethyl-L-lysyl-[protein] + 3 S-adenosyl-L-homocysteine + 3 H(+). In terms of biological role, methylates ribosomal protein L11. The protein is Ribosomal protein L11 methyltransferase of Rhizobium etli (strain ATCC 51251 / DSM 11541 / JCM 21823 / NBRC 15573 / CFN 42).